We begin with the raw amino-acid sequence, 259 residues long: Protein-tyrosine phosphatase RolB (259 aa).

Residues 219–259 (GISRPAASSPEPDLTLRLSGPDQEGEEGVMKPAAVNLKKEA) are disordered.

It catalyses the reaction O-phospho-L-tyrosyl-[protein] + H2O = L-tyrosyl-[protein] + phosphate. Induces differentiation and growth of neoplastic roots (hairy roots). Seems to function as a tyrosine phosphatase. The protein is Protein-tyrosine phosphatase RolB (rolB) of Rhizobium rhizogenes (Agrobacterium rhizogenes).